The following is a 707-amino-acid chain: Lipase maturation factor 2 (707 aa).

The next 10 membrane-spanning stretches (helical) occupy residues 10 to 30 (LFLQ…YTQI), 78 to 98 (LELL…LSPL), 102 to 122 (VIYL…QVFL), 123 to 143 (YFQW…VAPL), 165 to 185 (DLPF…SGVV), 227 to 247 (LSVV…FAPI), 259 to 279 (VLLQ…LMTL), 310 to 330 (ALLA…LAYG), 364 to 384 (LTLP…LSAL), and 399 to 419 (AVVQ…ISLV). Asn489 and Asn616 each carry an N-linked (GlcNAc...) asparagine glycan. A helical membrane pass occupies residues 637–657 (ALLWGLLMAVGAVRFVQALLA). Positions 665 to 707 (PLAPVSGEKRRPASQKDSGAASEQATAAPNPCSSSSRTTRRKK) are disordered. Residues 679–691 (QKDSGAASEQATA) show a composition bias toward polar residues.

It belongs to the lipase maturation factor family.

It is found in the endoplasmic reticulum membrane. Involved in the maturation of specific proteins in the endoplasmic reticulum. May be required for maturation and transport of active lipoprotein lipase (LPL) through the secretory pathway. The chain is Lipase maturation factor 2 (LMF2) from Homo sapiens (Human).